Reading from the N-terminus, the 179-residue chain is Protein GrpE (179 aa).

Residues 1–14 (MSKKDKKEEIKEEV) are compositionally biased toward basic and acidic residues. A disordered region spans residues 1-40 (MSKKDKKEEIKEEVEATEPTTEESVEEVAEETSENKELQE). Over residues 15 to 32 (EATEPTTEESVEEVAEET) the composition is skewed to acidic residues.

It belongs to the GrpE family. Homodimer.

It localises to the cytoplasm. In terms of biological role, participates actively in the response to hyperosmotic and heat shock by preventing the aggregation of stress-denatured proteins, in association with DnaK and GrpE. It is the nucleotide exchange factor for DnaK and may function as a thermosensor. Unfolded proteins bind initially to DnaJ; upon interaction with the DnaJ-bound protein, DnaK hydrolyzes its bound ATP, resulting in the formation of a stable complex. GrpE releases ADP from DnaK; ATP binding to DnaK triggers the release of the substrate protein, thus completing the reaction cycle. Several rounds of ATP-dependent interactions between DnaJ, DnaK and GrpE are required for fully efficient folding. The sequence is that of Protein GrpE from Streptococcus mutans serotype c (strain ATCC 700610 / UA159).